A 664-amino-acid chain; its full sequence is Protein LYK5 (664 aa).

A signal peptide spans methionine 1–alanine 26. At glutamine 27–lysine 277 the chain is on the extracellular side. N-linked (GlcNAc...) asparagine glycosylation is found at asparagine 45, asparagine 81, asparagine 111, asparagine 125, and asparagine 129. 3 disulfide bridges follow: cysteine 52/cysteine 114, cysteine 58/cysteine 181, and cysteine 112/cysteine 179. A chitin-binding site is contributed by glycine 135–serine 141. An N-linked (GlcNAc...) asparagine glycan is attached at asparagine 144. Residue glutamate 164–glycine 170 participates in chitin binding. The LysM domain occupies leucine 195–valine 238. Residue asparagine 213 is glycosylated (N-linked (GlcNAc...) asparagine). Residues proline 251 to proline 269 are compositionally biased toward pro residues. The interval proline 251–proline 270 is disordered. Residues tryptophan 278–leucine 298 traverse the membrane as a helical segment. Residues cysteine 299–asparagine 664 are Cytoplasmic-facing. The Protein kinase domain occupies lysine 351–isoleucine 643. Residues leucine 357–leucine 365 and lysine 395 each bind ATP.

This sequence belongs to the protein kinase superfamily. Ser/Thr protein kinase family.

It localises to the cell membrane. May recognize microbe-derived N-acetylglucosamine (NAG)-containing ligands. The chain is Protein LYK5 (LYK5) from Arabidopsis thaliana (Mouse-ear cress).